A 235-amino-acid polypeptide reads, in one-letter code: Small ribosomal subunit protein uS3 (235 aa).

In terms of domain architecture, KH type-2 spans 39–107 (VRKFLNKELA…PAQINIAEVK (69 aa)).

This sequence belongs to the universal ribosomal protein uS3 family. In terms of assembly, part of the 30S ribosomal subunit. Forms a tight complex with proteins S10 and S14.

Its function is as follows. Binds the lower part of the 30S subunit head. Binds mRNA in the 70S ribosome, positioning it for translation. The sequence is that of Small ribosomal subunit protein uS3 from Mannheimia succiniciproducens (strain KCTC 0769BP / MBEL55E).